The sequence spans 205 residues: Nuclear transcription factor Y subunit C-6 (205 aa).

Residues 1-24 (MEPKSTTPPPPPPPPVLGAPVPYP) form a disordered region.

This sequence belongs to the NFYC/HAP5 subunit family. Heterotrimeric transcription factor composed of three components, NF-YA, NF-YB and NF-YC. NF-YB and NF-YC must interact and dimerize for NF-YA association and DNA binding. Interacts with NFYB2. Interacts with NFYB8, NFYB10 and HD5/NFYB11.

The protein localises to the nucleus. The protein resides in the cytoplasm. Functionally, component of the NF-Y/HAP transcription factor complex. The protein is Nuclear transcription factor Y subunit C-6 of Oryza sativa subsp. japonica (Rice).